Reading from the N-terminus, the 111-residue chain is Large ribosomal subunit protein uL23 (111 aa).

The protein belongs to the universal ribosomal protein uL23 family. In terms of assembly, part of the 50S ribosomal subunit. Contacts protein L29, and trigger factor when it is bound to the ribosome.

One of the early assembly proteins it binds 23S rRNA. One of the proteins that surrounds the polypeptide exit tunnel on the outside of the ribosome. Forms the main docking site for trigger factor binding to the ribosome. The polypeptide is Large ribosomal subunit protein uL23 (Chlamydia felis (strain Fe/C-56) (Chlamydophila felis)).